Here is a 225-residue protein sequence, read N- to C-terminus: MKKKRKGCFAAAGFMMIFVFVIASFLLVLLFFNRDLIKKLPIDTKTIVLERLTDYKPLVEEELESQGLSNYTSLILGMMYQESKGKGNDPMQSSESLGLKRNEITDPQLSVKQGIKQFTLMYKTGKEKGVDLDTIIQSYNMGAGYIDFVAEHGGTHTEELAKQYSEQQVKKNPDLYTCGGNAKNFRYPYCYGDYTYAEKVKEKTKTVEESLQVATLETMESKAHE.

A helical membrane pass occupies residues 12–32; that stretch reads AGFMMIFVFVIASFLLVLLFF.

It is found in the cell membrane. This is an uncharacterized protein from Bacillus subtilis (strain 168).